We begin with the raw amino-acid sequence, 963 residues long: Kinesin-1 heavy chain (963 aa).

Residue Ala-2 is modified to N-acetylalanine. A Kinesin motor domain is found at 8 to 325 (NIKVMCRFRP…LLFGQRAKTI (318 aa)). 85–92 (GQTSSGKT) contributes to the ATP binding site. A Glycyl lysine isopeptide (Lys-Gly) (interchain with G-Cter in SUMO2) cross-link involves residue Lys-213. Positions 329 to 914 (VCVNVELTAE…AVRSKNMARR (586 aa)) form a coiled coil. The tract at residues 908–963 (SKNMARRGHSAQIAKPIRPGQHPAASPTHPSAIRGGGAFVQNSQPVAVRGGGGKQV) is disordered. Residues 915-963 (GHSAQIAKPIRPGQHPAASPTHPSAIRGGGAFVQNSQPVAVRGGGGKQV) are globular. Phosphoserine is present on Ser-933. The residue at position 956 (Arg-956) is an Omega-N-methylarginine.

Belongs to the TRAFAC class myosin-kinesin ATPase superfamily. Kinesin family. Kinesin subfamily. As to quaternary structure, oligomer composed of two heavy chains and two light chains. Interacts with GRIP1 and PPP1R42. Interacts with SYBU. Interacts with JAKMIP1. Interacts with PLEKHM2. Interacts with ECPAS. Interacts with ZFYVE27. Found in a complex with OGT, RHOT1, RHOT2 and TRAK1. Interacts with APP (via cytoplasmic domain).

The protein resides in the cytoplasm. The protein localises to the cytoskeleton. Its subcellular location is the cytolytic granule membrane. It is found in the lysosome membrane. Its function is as follows. Microtubule-dependent motor required for normal distribution of mitochondria and lysosomes. Can induce formation of neurite-like membrane protrusions in non-neuronal cells in a ZFYVE27-dependent manner. Regulates centrosome and nuclear positioning during mitotic entry. During the G2 phase of the cell cycle in a BICD2-dependent manner, antagonizes dynein function and drives the separation of nuclei and centrosomes. Required for anterograde axonal transportation of MAPK8IP3/JIP3 which is essential for MAPK8IP3/JIP3 function in axon elongation. Through binding with PLEKHM2 and ARL8B, directs lysosome movement toward microtubule plus ends. Involved in NK cell-mediated cytotoxicity. Drives the polarization of cytolytic granules and microtubule-organizing centers (MTOCs) toward the immune synapse between effector NK lymphocytes and target cells. The sequence is that of Kinesin-1 heavy chain from Homo sapiens (Human).